A 481-amino-acid chain; its full sequence is MTHQSDLIAEDIHAYLARHETKDLLRFITCGSVDDGKSTLIGRLLHDSRLIFEDQLAAIERDSQKHNTTDEAVDLALLVDGLQAEREQGITIDVAYRYFSTDTRKFIIADCPGHEQYTRNMATGASTADLAIILIDARYGVQTQTRRHSFIASLLGIRHVIVAVNKMDLLEFDQAVFERIRQDYLTFAKALDIHDIRFVPLSALRGDNVVSPSERMPWYDGPSLMQLLDSIRLDADQALQAFRLPVQYVNRPNLDFRGFCGTIAAGVIRPGDQVTVLPSGRQSRVRAIVTTDGELPVAATGQAVTLTLEDEIDISRGDMIVRHGEPLPLVADRLTVELVWMHDAPLQTGRAYWVKLAGKWLPGRVTAVHHRVNVNTMEREAASSLALNEIAEVTLEIDAPMAVDAYRQCRATGSLILVDRISNATLGAGMIRSAEPSAGIQSEKDAARRWQAFEIEFNELVRRHFPHWQARDMRDWPGHKE.

Residues 22 to 236 form the tr-type G domain; it reads KDLLRFITCG…LLDSIRLDAD (215 aa). Residues 31–38 form a G1 region; it reads GSVDDGKS. 31-38 provides a ligand contact to GTP; it reads GSVDDGKS. A G2 region spans residues 89 to 93; it reads GITID. Residues 110–113 are G3; it reads DCPG. GTP contacts are provided by residues 110 to 114 and 165 to 168; these read DCPGH and NKMD. The interval 165-168 is G4; sequence NKMD. The tract at residues 202-204 is G5; that stretch reads SAL.

It belongs to the TRAFAC class translation factor GTPase superfamily. Classic translation factor GTPase family. CysN/NodQ subfamily. As to quaternary structure, heterodimer composed of CysD, the smaller subunit, and CysN.

The catalysed reaction is sulfate + ATP + H(+) = adenosine 5'-phosphosulfate + diphosphate. The protein operates within sulfur metabolism; hydrogen sulfide biosynthesis; sulfite from sulfate: step 1/3. With CysD forms the ATP sulfurylase (ATPS) that catalyzes the adenylation of sulfate producing adenosine 5'-phosphosulfate (APS) and diphosphate, the first enzymatic step in sulfur assimilation pathway. APS synthesis involves the formation of a high-energy phosphoric-sulfuric acid anhydride bond driven by GTP hydrolysis by CysN coupled to ATP hydrolysis by CysD. In Laribacter hongkongensis (strain HLHK9), this protein is Sulfate adenylyltransferase subunit 1.